Consider the following 139-residue polypeptide: Crossover junction endodeoxyribonuclease Hje (139 aa).

The Mg(2+) site is built by E10, D39, and E52.

Belongs to the Holliday junction resolvase Hjc family. Hje subfamily. Homodimer. The cofactor is Mg(2+).

The catalysed reaction is Endonucleolytic cleavage at a junction such as a reciprocal single-stranded crossover between two homologous DNA duplexes (Holliday junction).. A structure-specific endonuclease that resolves Holliday junction (HJ) intermediates during genetic recombination. Acts only on 4-way DNA junctions in a sequence non-specific manner; introduces paired nicks in opposing strands 2 bases 3' of the point of strand exchange only on continuous strands of 4-way junction DNA. Cleaves both mobile and immobile junctions. Its function is as follows. Redundant function with Holliday junction resolvase Hjc. The chain is Crossover junction endodeoxyribonuclease Hje from Sulfolobus acidocaldarius (strain ATCC 33909 / DSM 639 / JCM 8929 / NBRC 15157 / NCIMB 11770).